We begin with the raw amino-acid sequence, 406 residues long: Endoplasmic reticulum resident protein 44 (406 aa).

The signal sequence occupies residues 1 to 29; sequence MIPGIFLSLPDLRCSLLLLVTWVFTPVTA. In terms of domain architecture, Thioredoxin spans 30–138; the sequence is EIISLDTENI…VKALADYIRQ (109 aa). Intrachain disulfides connect cysteine 189–cysteine 241 and cysteine 301–cysteine 318. The interaction with ITPR1 stretch occupies residues 236-285; that stretch reads WIQDKCVPLVREITFENGEELTEEGLPFLILFHMKEDTESLEIFQNEVAR. The interval 360–387 is disordered; the sequence is FHHGPDPTDTAPGEEVQDVASSPPESSF. Polar residues predominate over residues 378–387; sequence VASSPPESSF. Positions 403–406 match the Prevents secretion from ER motif; sequence RDEL.

In terms of assembly, forms mixed disulfides with both ERO1A and ERO1B and cargo folding intermediates; the interactions with ERO1A and ERO1B result in their retention in the endoplasmic reticulum. Directly interacts with ITPR1 in a pH-, redox state- and calcium-dependent manner, but not with ITPR2 or ITPR3. The strength of this interaction inversely correlates with calcium concentration.

Its subcellular location is the endoplasmic reticulum lumen. Its function is as follows. Mediates thiol-dependent retention in the early secretory pathway, forming mixed disulfides with substrate proteins through its conserved CRFS motif. Inhibits the calcium channel activity of ITPR1. May have a role in the control of oxidative protein folding in the endoplasmic reticulum. Required to retain ERO1A and ERO1B in the endoplasmic reticulum. This is Endoplasmic reticulum resident protein 44 (ERP44) from Bos taurus (Bovine).